The following is a 281-amino-acid chain: NAD kinase (281 aa).

Aspartate 61 (proton acceptor) is an active-site residue. NAD(+) contacts are provided by residues 61–62 (DG), 134–135 (ND), arginine 145, aspartate 164, 175–180 (TAYSLS), and glutamine 234.

The protein belongs to the NAD kinase family. It depends on a divalent metal cation as a cofactor.

The protein localises to the cytoplasm. It catalyses the reaction NAD(+) + ATP = ADP + NADP(+) + H(+). In terms of biological role, involved in the regulation of the intracellular balance of NAD and NADP, and is a key enzyme in the biosynthesis of NADP. Catalyzes specifically the phosphorylation on 2'-hydroxyl of the adenosine moiety of NAD to yield NADP. In Clostridium botulinum (strain ATCC 19397 / Type A), this protein is NAD kinase.